The sequence spans 498 residues: Pre-glycoprotein polyprotein GP complex (498 aa).

Residue glycine 2 is the site of N-myristoyl glycine; by host attachment. The Extracellular segment spans residues 2–17 (GQIVTMFEALPHIIDE). The chain crosses the membrane as a helical span at residues 18–33 (VINIVIIVLIVITGIK). Residues 34-58 (AVYNFATCGIFALISFLLLAGRSCG) lie on the Cytoplasmic side of the membrane. Cysteine 57 lines the Zn(2+) pocket. Residues 59–438 (MYGLKGPDIY…QGSTPLALMD (380 aa)) are Extracellular-facing. N-linked (GlcNAc...) asparagine; by host glycosylation is found at asparagine 85, asparagine 95, asparagine 114, asparagine 124, and asparagine 171. Cystine bridges form between cysteine 92–cysteine 239, cysteine 123–cysteine 160, cysteine 184–cysteine 220, cysteine 285–cysteine 298, cysteine 307–cysteine 316, and cysteine 370–cysteine 391. Asparagine 232 carries an N-linked (GlcNAc...) asparagine; by host glycan. Asparagine 371, asparagine 396, and asparagine 401 each carry an N-linked (GlcNAc...) asparagine; by host glycan. Residues 439 to 459 (LLMFSTSAYLVSIFLHLVKIP) form a helical membrane-spanning segment. The Cytoplasmic portion of the chain corresponds to 460-498 (THRHIKGGSCPKPHRLTNKGICSCGAFKVPGVKTVWKRR). Histidine 461, histidine 463, cysteine 469, histidine 473, cysteine 481, and cysteine 483 together coordinate Zn(2+).

It belongs to the arenaviridae GPC protein family. Interacts with glycoprotein G2. Part of the GP complex (GP-C) together with glycoprotein G1 and glycoprotein G2. The GP-complex interacts with protein Z, which interacts with ribonucleocapsid; these interactions may induce virion budding. As to quaternary structure, homotrimer; disulfide-linked. In pre-fusion state, G1 homotrimers bind G2 homotrimers via ionic interactions. Part of the GP complex (GP-C) together with glycoprotein G2 and the stable signal peptide. Interacts with the primary host receptor DAG1 on the cell surface. The GP-complex interacts with protein Z, which interacts with ribonucleocapsid; these interactions may induce virion budding. In terms of assembly, homotrimer. Interacts with the stable signal peptide. In pre-fusion state, G2 homotrimers bind G1 homotrimers via ionic interactions. Part of the GP complex (GP-C) together with glycoprotein G1 and the stable signal peptide. Acidification in the endosome triggers rearrangements, which ultimately leads to a 6 helix bundle formed by the two heptad repeat domains (HR1 and HR2) in post-fusion state. The GP-complex interacts with protein Z, which interacts with ribonucleocapsid; these interactions may induce virion budding. In terms of processing, specific enzymatic cleavages in vivo yield mature proteins. GP-C polyprotein is cleaved in the endoplasmic reticulum by the host protease MBTPS1. Only cleaved glycoprotein is incorporated into virions. Post-translationally, the SSP remains stably associated with the GP complex following cleavage by signal peptidase and plays crucial roles in the trafficking of GP through the secretory pathway. Myristoylation is necessary for GP2-mediated fusion activity. Inhibition of host myristoylation by the compound DDD85646 leads to the abrogation of GP2-mediated fusion upon exposure to low pH and inhibition of viral multiplication.

It localises to the virion membrane. The protein resides in the host endoplasmic reticulum membrane. Its subcellular location is the host Golgi apparatus membrane. The protein localises to the host cell membrane. Functionally, functions as a cleaved signal peptide that is retained as the third component of the GP complex (GP-C). Helps to stabilize the spike complex in its native conformation. The SSP is required for efficient glycoprotein expression, post-translational maturation cleavage of G1 and G2, glycoprotein transport to the cell surface plasma membrane, formation of infectious virus particles, and acid pH-dependent glycoprotein-mediated cell fusion. Its function is as follows. Forms the virion spikes together with glycoprotein G2. The glycoprotein spike trimers are connected to the underlying matrix. Interacts with the host receptor. Mediates virus attachment to the host primary receptor alpha-dystroglycan DAG1 (alpha-DG) at the cell surface. Down-modulates host DAG1. Forms the virion spikes together with glycoprotein G1. The glycoprotein spike trimers are connected to the underlying matrix. Class I viral fusion protein that directs fusion of viral and host endosomal membranes, leading to delivery of the nucleocapsid into the cytoplasm. Membrane fusion is mediated by irreversible conformational changes induced by acidification. The protein is Pre-glycoprotein polyprotein GP complex of Homo sapiens (Human).